A 1005-amino-acid polypeptide reads, in one-letter code: Translation initiation factor IF-2 (1005 aa).

Disordered regions lie at residues 54–337 and 368–414; these read KYVP…RRPQ and PKPK…PTSV. A compositionally biased stretch (polar residues) spans 58 to 73; it reads SPSTHSMPPTRPTSHS. Residues 75–86 show a composition bias toward pro residues; that stretch reads PLPPQPGKPQPK. The segment covering 146 to 157 has biased composition (polar residues); that stretch reads GSNSPSHSESTP. Low complexity-rich tracts occupy residues 189 to 198 and 222 to 240; these read PSPAAMAGRA and VESA…PRAE. A compositionally biased stretch (basic and acidic residues) spans 258-274; sequence PRSETSEDGARRGEKLV. A compositionally biased stretch (basic residues) spans 392-401; it reads GGRKLSRRDR. A tr-type G domain is found at 495-668; sequence RRPPVVTIMG…LLVSEVEDLY (174 aa). Residues 504-511 form a G1 region; sequence GHVDHGKT. Residue 504 to 511 participates in GTP binding; that stretch reads GHVDHGKT. Residues 529-533 are G2; that stretch reads GITQH. A G3 region spans residues 554–557; the sequence is DTPG. GTP-binding positions include 554–558 and 608–611; these read DTPGH and NKID. The segment at 608 to 611 is G4; that stretch reads NKID. A G5 region spans residues 644–646; that stretch reads SAI.

This sequence belongs to the TRAFAC class translation factor GTPase superfamily. Classic translation factor GTPase family. IF-2 subfamily.

It is found in the cytoplasm. Its function is as follows. One of the essential components for the initiation of protein synthesis. Protects formylmethionyl-tRNA from spontaneous hydrolysis and promotes its binding to the 30S ribosomal subunits. Also involved in the hydrolysis of GTP during the formation of the 70S ribosomal complex. The chain is Translation initiation factor IF-2 from Cyanothece sp. (strain PCC 7425 / ATCC 29141).